A 291-amino-acid polypeptide reads, in one-letter code: Phosphate import ATP-binding protein PstB (291 aa).

The segment covering 1–17 (MANTNVKEKELAKHTDQ) has biased composition (basic and acidic residues). The disordered stretch occupies residues 1–40 (MANTNVKEKELAKHTDQSQESISTVVSSNEVKHNKESDSN). The span at 18 to 29 (SQESISTVVSSN) shows a compositional bias: polar residues. The segment covering 30–40 (EVKHNKESDSN) has biased composition (basic and acidic residues). In terms of domain architecture, ABC transporter spans 45 to 286 (YSTQNLDLWY…PSDKQTEDYI (242 aa)). 77–84 (GPSGCGKS) contributes to the ATP binding site.

It belongs to the ABC transporter superfamily. Phosphate importer (TC 3.A.1.7) family. The complex is composed of two ATP-binding proteins (PstB), two transmembrane proteins (PstC and PstA) and a solute-binding protein (PstS).

The protein localises to the cell membrane. The catalysed reaction is phosphate(out) + ATP + H2O = ADP + 2 phosphate(in) + H(+). In terms of biological role, part of the ABC transporter complex PstSACB involved in phosphate import. Responsible for energy coupling to the transport system. In Staphylococcus haemolyticus (strain JCSC1435), this protein is Phosphate import ATP-binding protein PstB.